The chain runs to 2072 residues: Protein still life, isoform SIF type 1 (2072 aa).

The N-myristoyl glycine moiety is linked to residue glycine 2. The region spanning 29 to 147 (RRDGHLLSSF…ECCSPSFKFS (119 aa)) is the WH1 domain. Disordered regions lie at residues 153–188 (SYSL…EPQC), 245–284 (DNVA…NTNT), 327–355 (EGTQ…RNKD), 459–486 (NNTM…RGYP), 502–576 (EGSP…SPTS), 618–655 (AKSS…ELIR), and 699–747 (SGSS…YKSA). Residues 275-284 (VANSGVNTNT) are compositionally biased toward polar residues. Composition is skewed to low complexity over residues 338–351 (SVGT…GTGT), 459–476 (NNTM…SGSR), and 522–553 (SSSN…PPQR). A compositionally biased stretch (polar residues) spans 564-576 (APNVTPTPGSPTS). Positions 634–655 (IRDKERDRDRDGYYSDRNELIR) are enriched in basic and acidic residues. A compositionally biased stretch (polar residues) spans 732 to 743 (SLRQDSSLNDSG). The PH domain occupies 840–958 (TGAVRKAGFL…SIHSACAAAF (119 aa)). Positions 1088-1119 (GRGATKRRPPMLSRSNSGSSRRSMQMNSRDEP) are disordered. The segment covering 1100-1114 (SRSNSGSSRRSMQMN) has biased composition (low complexity). One can recognise an RBD domain in the interval 1121–1188 (KTFKVAMPDN…PHRNDLIENY (68 aa)). One can recognise a PDZ domain in the interval 1204 to 1293 (QVELQRTTLE…LSMMMRSSRT (90 aa)). Positions 1403–1424 (AEQETRKSSPTGSVTSSVSTTA) are disordered. Residues 1410 to 1424 (SSPTGSVTSSVSTTA) are compositionally biased toward low complexity. Residues 1436–1630 (KLRKVVMELV…EKVAEHINEM (195 aa)) form the DH domain. Disordered regions lie at residues 1803 to 1832 (MKNF…NSQT), 1844 to 2039 (HGSH…YQPV), and 2051 to 2072 (PRDM…DVKN). 2 stretches are compositionally biased toward low complexity: residues 1811-1821 (GSVSGHSSQGM) and 1926-1943 (QQQQ…QQGH). Residues 1970–1984 (HSSDIERIDPGTKSE) show a composition bias toward basic and acidic residues. The span at 2007 to 2022 (LTLSTTSTLSVGSTGS) shows a compositional bias: low complexity. Polar residues predominate over residues 2023–2032 (QARLIQSSHP).

As to expression, expressed in both larval and adult brains, mainly in a subset of neurons but not in glia. In the adult eye is expressed in the two primary pigment cells in the subapical region of the eye. Also present in photoreceptors.

It is found in the synapse. Functionally, regulates synaptic differentiation through the organization of actin cytoskeleton possibly by activating Rho-like GTPases. Is likely a factor in the cascade of Rac1 or Cdc42 in the neurons. May play a role in maintaining proper septate junction functions. Required for eye development and most likely affects corneal lens-formation. This is Protein still life, isoform SIF type 1 (sif) from Drosophila melanogaster (Fruit fly).